The sequence spans 447 residues: Phosphoglucosamine mutase (447 aa).

The active-site Phosphoserine intermediate is the S104. Residues S104, D243, D245, and D247 each contribute to the Mg(2+) site. S104 is modified (phosphoserine).

It belongs to the phosphohexose mutase family. The cofactor is Mg(2+). In terms of processing, activated by phosphorylation.

It catalyses the reaction alpha-D-glucosamine 1-phosphate = D-glucosamine 6-phosphate. Its function is as follows. Catalyzes the conversion of glucosamine-6-phosphate to glucosamine-1-phosphate. In Corynebacterium diphtheriae (strain ATCC 700971 / NCTC 13129 / Biotype gravis), this protein is Phosphoglucosamine mutase.